The sequence spans 286 residues: Polyamine aminopropyltransferase (286 aa).

One can recognise a PABS domain in the interval 5–238 (TMWHETLHDQ…GIMTFAWATD (234 aa)). Position 33 (Q33) interacts with S-methyl-5'-thioadenosine. Spermidine is bound by residues H64 and D88. S-methyl-5'-thioadenosine contacts are provided by residues E108 and 140 to 141 (DG). D158 functions as the Proton acceptor in the catalytic mechanism. Residue 158–161 (DCTD) participates in spermidine binding. Position 165 (P165) interacts with S-methyl-5'-thioadenosine.

It belongs to the spermidine/spermine synthase family. As to quaternary structure, homodimer or homotetramer.

Its subcellular location is the cytoplasm. The catalysed reaction is S-adenosyl 3-(methylsulfanyl)propylamine + putrescine = S-methyl-5'-thioadenosine + spermidine + H(+). The protein operates within amine and polyamine biosynthesis; spermidine biosynthesis; spermidine from putrescine: step 1/1. Its function is as follows. Catalyzes the irreversible transfer of a propylamine group from the amino donor S-adenosylmethioninamine (decarboxy-AdoMet) to putrescine (1,4-diaminobutane) to yield spermidine. The protein is Polyamine aminopropyltransferase of Salmonella arizonae (strain ATCC BAA-731 / CDC346-86 / RSK2980).